Consider the following 566-residue polypeptide: Transcription factor atf1 (566 aa).

The segment covering 1–42 has biased composition (polar residues); it reads MSPSPVNTSTEPASVAAVSNGNATASSTQVPENNQSDSFAPP. Disordered stretches follow at residues 1 to 83, 96 to 117, 315 to 345, and 357 to 479; these read MSPS…FVGS, SFGS…PSLS, QQQT…PQAS, and SQQF…KSFL. A compositionally biased stretch (low complexity) spans 43-53; sequence SNNSQQNQQSS. Composition is skewed to polar residues over residues 65 to 76 and 97 to 106; these read ANANPADQSDGV and FGSTASVGQG. A compositionally biased stretch (low complexity) spans 107 to 117; sequence NPSLNRNPSLS. 2 stretches are compositionally biased toward polar residues: residues 379 to 412 and 421 to 460; these read TLRQ…TANS and TDYS…YSKG. Positions 466 to 479 are enriched in basic and acidic residues; sequence SKNETDEEKRKSFL. One can recognise a bZIP domain in the interval 472–535; it reads EEKRKSFLER…VSLKTLLIAH (64 aa). Residues 474 to 503 are basic motif; sequence KRKSFLERNRQAALKCRQRKKQWLSNLQAK. The tract at residues 514-528 is leucine-zipper; the sequence is LSAQVSALREEIVSL.

Belongs to the bZIP family. In terms of assembly, heterodimer of pcr1/mts2 and atf1/mts1. Post-translationally, phosphorylated by sty1/spc1.

The protein localises to the nucleus. In terms of biological role, transcription factor required for sexual development and entry into stationary phase. Binds and activates CRE sites (cAMP-response elements, also known as M26 meiotic recombination hotspots). This Schizosaccharomyces pombe (strain 972 / ATCC 24843) (Fission yeast) protein is Transcription factor atf1 (atf1).